The primary structure comprises 401 residues: Arylacetamide deacetylase-like 2 (401 aa).

The first 18 residues, 1–18, serve as a signal peptide directing secretion; that stretch reads MGLKALCLGLLCVLFVSH. The Involved in the stabilization of the negatively charged intermediate by the formation of the oxyanion hole signature appears at 111–113; that stretch reads HGG. Residues Cys-116 and Cys-338 are joined by a disulfide bond. Catalysis depends on residues Ser-189, Asp-341, and His-371.

The protein belongs to the 'GDXG' lipolytic enzyme family.

It localises to the secreted. The protein is Arylacetamide deacetylase-like 2 (AADACL2) of Homo sapiens (Human).